A 193-amino-acid chain; its full sequence is Potassium-transporting ATPase KdpC subunit (193 aa).

A helical membrane pass occupies residues 7–27; the sequence is PLIVVFVVLVAVTGLAYPAVM.

This sequence belongs to the KdpC family. The system is composed of three essential subunits: KdpA, KdpB and KdpC.

It is found in the cell inner membrane. Its function is as follows. Part of the high-affinity ATP-driven potassium transport (or Kdp) system, which catalyzes the hydrolysis of ATP coupled with the electrogenic transport of potassium into the cytoplasm. This subunit acts as a catalytic chaperone that increases the ATP-binding affinity of the ATP-hydrolyzing subunit KdpB by the formation of a transient KdpB/KdpC/ATP ternary complex. The sequence is that of Potassium-transporting ATPase KdpC subunit from Burkholderia mallei (strain NCTC 10247).